Here is a 117-residue protein sequence, read N- to C-terminus: Glycine cleavage system H-like protein (117 aa).

The Lipoyl-binding domain occupies 21–103 (IVKLGLSSQM…ESEGWFVVLQ (83 aa)). Position 62 is an N6-lipoyllysine (K62).

It belongs to the GcvH family. Requires (R)-lipoate as cofactor.

This Chlamydia trachomatis serovar L2 (strain ATCC VR-902B / DSM 19102 / 434/Bu) protein is Glycine cleavage system H-like protein.